Reading from the N-terminus, the 101-residue chain is Small ribosomal subunit protein uS14 (101 aa).

Belongs to the universal ribosomal protein uS14 family. Part of the 30S ribosomal subunit. Contacts proteins S3 and S10.

Its function is as follows. Binds 16S rRNA, required for the assembly of 30S particles and may also be responsible for determining the conformation of the 16S rRNA at the A site. The sequence is that of Small ribosomal subunit protein uS14 from Bartonella bacilliformis (strain ATCC 35685 / KC583 / Herrer 020/F12,63).